The sequence spans 203 residues: Holliday junction branch migration complex subunit RuvA (203 aa).

The domain I stretch occupies residues 1–64; it reads MIGRLRGIII…EDAQLLYGFN (64 aa). The segment at 65–142 is domain II; sequence NKQERTLFKE…KGLHGDLFTP (78 aa). Positions 143–154 are flexible linker; sequence AADLVLTSPASP. The tract at residues 155–203 is domain III; the sequence is ATDDAEQEAVAALVALGYKPQEASRMVSKIARPDASSETLIREALHAAL.

Belongs to the RuvA family. In terms of assembly, homotetramer. Forms an RuvA(8)-RuvB(12)-Holliday junction (HJ) complex. HJ DNA is sandwiched between 2 RuvA tetramers; dsDNA enters through RuvA and exits via RuvB. An RuvB hexamer assembles on each DNA strand where it exits the tetramer. Each RuvB hexamer is contacted by two RuvA subunits (via domain III) on 2 adjacent RuvB subunits; this complex drives branch migration. In the full resolvosome a probable DNA-RuvA(4)-RuvB(12)-RuvC(2) complex forms which resolves the HJ.

The protein localises to the cytoplasm. The RuvA-RuvB-RuvC complex processes Holliday junction (HJ) DNA during genetic recombination and DNA repair, while the RuvA-RuvB complex plays an important role in the rescue of blocked DNA replication forks via replication fork reversal (RFR). RuvA specifically binds to HJ cruciform DNA, conferring on it an open structure. The RuvB hexamer acts as an ATP-dependent pump, pulling dsDNA into and through the RuvAB complex. HJ branch migration allows RuvC to scan DNA until it finds its consensus sequence, where it cleaves and resolves the cruciform DNA. This is Holliday junction branch migration complex subunit RuvA from Escherichia fergusonii (strain ATCC 35469 / DSM 13698 / CCUG 18766 / IAM 14443 / JCM 21226 / LMG 7866 / NBRC 102419 / NCTC 12128 / CDC 0568-73).